Consider the following 498-residue polypeptide: ATP synthase subunit beta, chloroplastic (498 aa).

172–179 (GGAGVGKT) serves as a coordination point for ATP.

This sequence belongs to the ATPase alpha/beta chains family. In terms of assembly, F-type ATPases have 2 components, CF(1) - the catalytic core - and CF(0) - the membrane proton channel. CF(1) has five subunits: alpha(3), beta(3), gamma(1), delta(1), epsilon(1). CF(0) has four main subunits: a(1), b(1), b'(1) and c(9-12).

It localises to the plastid. The protein localises to the chloroplast thylakoid membrane. It carries out the reaction ATP + H2O + 4 H(+)(in) = ADP + phosphate + 5 H(+)(out). Its function is as follows. Produces ATP from ADP in the presence of a proton gradient across the membrane. The catalytic sites are hosted primarily by the beta subunits. The protein is ATP synthase subunit beta, chloroplastic of Nicotiana sp. (Tobacco).